The following is a 629-amino-acid chain: Acetylcholinesterase (629 aa).

The first 38 residues, 1–38 (MGQLSILCLFVTVCASVCGYSWPSDETTTKPSQFKDFH), serve as a signal peptide directing secretion. Residues cysteine 103 and cysteine 130 are joined by a disulfide bond. Asparagine 125 carries an N-linked (GlcNAc...) asparagine glycan. Serine 253 (acyl-ester intermediate) is an active-site residue. Cysteines 307 and 322 form a disulfide. The N-linked (GlcNAc...) asparagine glycan is linked to asparagine 308. Glutamate 382 functions as the Charge relay system in the catalytic mechanism. N-linked (GlcNAc...) asparagine glycosylation is present at asparagine 418. The cysteines at positions 458 and 574 are disulfide-linked. Residue histidine 496 is the Charge relay system of the active site. N-linked (GlcNAc...) asparagine glycosylation is present at asparagine 509. The GPI-anchor amidated serine moiety is linked to residue serine 605. A propeptide spans 606 to 629 (SSNELLPPSTSLVLIWIMTLLNAL) (removed in mature form).

The protein belongs to the type-B carboxylesterase/lipase family. As to quaternary structure, homodimer; disulfide-linked. Post-translationally, the N-terminus is blocked.

It is found in the synapse. The protein localises to the cell membrane. The catalysed reaction is acetylcholine + H2O = choline + acetate + H(+). Rapidly hydrolyzes choline released into the synapse. The chain is Acetylcholinesterase from Leptinotarsa decemlineata (Colorado potato beetle).